The chain runs to 437 residues: (S)-6-hydroxynicotine oxidase (437 aa).

Residues serine 16, 35–37, arginine 43, 57–60, valine 231, serine 405, and 413–415 each bind FAD; these read EAR, GGAG, and EYI.

It belongs to the flavin monoamine oxidase family. Homodimer. It depends on FAD as a cofactor.

It carries out the reaction (S)-6-hydroxynicotine + O2 + H2O = 6-hydroxypseudooxynicotine + H2O2. It catalyses the reaction (S)-6-hydroxynicotine + O2 = 6-hydroxy-N-methylmyosmine + H2O2. The protein operates within alkaloid degradation; nicotine degradation; 6-hydroxypseudooxynicotine from nicotine (S-isomer route): step 2/2. Partially inhibited by Co(2+) or Zn(2+) and significantly inhibited by Ag(+), Cu(2+) and Hg(2+). Functionally, involved in the degradation of L-nicotine. Catalyzes the oxidation of (S)-6-hydroxynicotine (6-hydroxy-L-nicotine) to 6-hydroxypseudooxynicotine. Oxidation of the pyrrolidine ring of (S)-6-hydroxynicotine leads to the formation of the optically inactive 6-hydroxy-N-methylmyosmine, which hydrolyzes spontaneously to 6-hydroxypseudooxynicotine. Acts with absolute stereospecificity on the L-form of 6-hydroxynicotine. Also involved in the degradation of nornicotine, and catalyzes the oxidation of 6-hydroxynornicotine to 6-hydroxymyosmine, which hydrolyzes to 6-hydroxypseudooxynornicotine. In vitro, converts (S)-nicotine into N-methylmyosmine, which spontaneously hydrolyzes spontaneously into pseudooxynicotine, but catalytic efficiency is about 1900-fold higher with (S)-6-hydroxynicotine. This Shinella sp. (strain HZN7) protein is (S)-6-hydroxynicotine oxidase.